The primary structure comprises 261 residues: ATP synthase subunit a (261 aa).

The next 6 membrane-spanning stretches (helical) occupy residues 45-65 (ITNV…ILVL), 107-127 (VMTL…PLSF), 133-153 (MAVT…LGFM), 162-182 (MFWV…IEVI), 209-229 (IAGF…VTAI), and 232-252 (LELL…CVYL).

It belongs to the ATPase A chain family. F-type ATPases have 2 components, CF(1) - the catalytic core - and CF(0) - the membrane proton channel. CF(1) has five subunits: alpha(3), beta(3), gamma(1), delta(1), epsilon(1). CF(0) has four main subunits: a, b, b' and c.

It is found in the cell inner membrane. In terms of biological role, key component of the proton channel; it plays a direct role in the translocation of protons across the membrane. This is ATP synthase subunit a from Cereibacter sphaeroides (strain ATCC 17029 / ATH 2.4.9) (Rhodobacter sphaeroides).